A 666-amino-acid chain; its full sequence is DNA-directed RNA polymerase subunit beta' (666 aa).

Residues C69, C71, C87, and C90 each contribute to the Zn(2+) site. Positions 489, 491, and 493 each coordinate Mg(2+).

The protein belongs to the RNA polymerase beta' chain family. RpoC1 subfamily. In plastids the minimal PEP RNA polymerase catalytic core is composed of four subunits: alpha, beta, beta', and beta''. When a (nuclear-encoded) sigma factor is associated with the core the holoenzyme is formed, which can initiate transcription. Requires Mg(2+) as cofactor. Zn(2+) serves as cofactor.

Its subcellular location is the plastid. It is found in the chloroplast. The catalysed reaction is RNA(n) + a ribonucleoside 5'-triphosphate = RNA(n+1) + diphosphate. Its function is as follows. DNA-dependent RNA polymerase catalyzes the transcription of DNA into RNA using the four ribonucleoside triphosphates as substrates. This Chara vulgaris (Common stonewort) protein is DNA-directed RNA polymerase subunit beta'.